The primary structure comprises 557 residues: Potassium-transporting ATPase potassium-binding subunit (557 aa).

A run of 12 helical transmembrane segments spans residues 5–25, 63–83, 132–152, 170–190, 253–273, 283–303, 329–349, 356–376, 379–399, 416–436, 484–504, and 526–546; these read GFLL…PLGS, LSAI…MLLG, GLTV…FALI, LLRI…LFFI, FVQM…FGEV, LLWA…WAEV, VLVS…AVIA, ALGG…FGGV, GLYG…LMIG, LTAL…ALAM, LLAL…MAIA, and LFVG…FIPA.

Belongs to the KdpA family. As to quaternary structure, the system is composed of three essential subunits: KdpA, KdpB and KdpC.

The protein resides in the cell inner membrane. Part of the high-affinity ATP-driven potassium transport (or Kdp) system, which catalyzes the hydrolysis of ATP coupled with the electrogenic transport of potassium into the cytoplasm. This subunit binds the periplasmic potassium ions and delivers the ions to the membrane domain of KdpB through an intramembrane tunnel. This chain is Potassium-transporting ATPase potassium-binding subunit, found in Escherichia coli (strain UTI89 / UPEC).